The primary structure comprises 775 residues: Kojibiose phosphorylase (775 aa).

361 to 362 (WD) serves as a coordination point for substrate. Glutamate 501 serves as the catalytic Proton donor. 614 to 615 (KQ) lines the substrate pocket.

It belongs to the glycosyl hydrolase 65 family. As to quaternary structure, homohexamer.

The catalysed reaction is kojibiose + phosphate = beta-D-glucose 1-phosphate + D-glucose. Inhibited by Hg(2+) and Pb(2+). Functionally, catalyzes the reversible phosphorolysis of kojibiose into beta-D-glucose 1-phosphate (Glc1P) and D-glucose. Can act with alpha-1,2-oligoglucans, such as selaginose, but more slowly. Inactive when disaccharides with linkages other than alpha-1,2 linkages, such as sophorose, trehalose, neotrehalose, nigerose, laminaribiose, maltose, cellobiose, isomaltose, gentiobiose, sucrose and lactose, are used as substrates. In contrast, shows broad specificity for the reverse reaction. Various monosaccharides and disaccharides having a glucosyl residue at the non-reducing end are effective acceptors. The protein is Kojibiose phosphorylase of Thermoanaerobacter brockii (Thermoanaerobium brockii).